The chain runs to 130 residues: MKNEFSIKFNFPDGILGFEEIKEFIIKDSEYKPFSIMQSINGEINFLVTSPFNFLEKYLPNIEEKDWLDVQAENEDEKVILCIINMHVKTYKEITANLKAPIILNKKKLIGKQAISTNEEHYLRYRVFKE.

The protein belongs to the FliW family. Interacts with translational regulator CsrA and flagellin(s).

It localises to the cytoplasm. Its function is as follows. Acts as an anti-CsrA protein, binds CsrA and prevents it from repressing translation of its target genes, one of which is flagellin. Binds to flagellin and participates in the assembly of the flagellum. The sequence is that of Flagellar assembly factor FliW from Borrelia hermsii (strain HS1 / DAH).